The primary structure comprises 656 residues: Phosphoprotein 85 (656 aa).

Disordered stretches follow at residues 1-174 (MSSR…EGDE) and 615-656 (NGNH…EYCC). Positions 46-55 (SATEDLDRME) are enriched in basic and acidic residues. Composition is skewed to low complexity over residues 59–70 (SPYSVSSDAPSS) and 140–160 (DNSSSGGSSSRTTSNSSRSTS). The span at 625 to 634 (SPPPPLPPRD) shows a compositional bias: pro residues. Basic and acidic residues predominate over residues 635–656 (YPQRDERDRHRRDRRDSGEYCC).

This sequence belongs to the herpesviridae pp85 family. In terms of processing, phosphorylated.

It localises to the virion tegument. The protein resides in the host cytoplasm. This chain is Phosphoprotein 85 (UL25), found in Homo sapiens (Human).